We begin with the raw amino-acid sequence, 137 residues long: Large ribosomal subunit protein uL16 (137 aa).

Belongs to the universal ribosomal protein uL16 family. Part of the 50S ribosomal subunit.

In terms of biological role, binds 23S rRNA and is also seen to make contacts with the A and possibly P site tRNAs. The polypeptide is Large ribosomal subunit protein uL16 (Halorhodospira halophila (strain DSM 244 / SL1) (Ectothiorhodospira halophila (strain DSM 244 / SL1))).